The following is a 229-amino-acid chain: Protein GLC8 (229 aa).

Disordered stretches follow at residues 1 to 21 (MGGI…QQDP), 35 to 62 (TQKN…EIIG), and 107 to 229 (QFQD…TKEP). A Phosphoserine modification is found at Ser12. The segment covering 107–117 (QFQDIHIDEPK) has biased composition (basic and acidic residues). Thr118 carries the phosphothreonine; by PHO85 modification. Phosphoserine is present on Ser158. Residues 164–173 (FEIKENKQPD) are compositionally biased toward basic and acidic residues. Over residues 175 to 184 (ETNDENDEDS) the composition is skewed to acidic residues. Residue Ser184 is modified to Phosphoserine. Basic and acidic residues predominate over residues 185–196 (PEARHKKFEEMR).

In terms of processing, phosphorylated by the cyclin-CDKs PCL6-PHO85 and PCL7-PHO85. Phosphorylation of Thr-118 inactivates GLC8.

Modulator of GLC7 type-1 protein phosphatase. The protein is Protein GLC8 (GLC8) of Saccharomyces cerevisiae (strain ATCC 204508 / S288c) (Baker's yeast).